The following is a 179-amino-acid chain: Inosine/xanthosine triphosphatase (179 aa).

Mg(2+) is bound at residue Glu71. Residue 71 to 72 participates in substrate binding; sequence EA.

This sequence belongs to the YjjX NTPase family. As to quaternary structure, homodimer. The cofactor is Mg(2+). It depends on Mn(2+) as a cofactor.

The catalysed reaction is XTP + H2O = XDP + phosphate + H(+). It catalyses the reaction ITP + H2O = IDP + phosphate + H(+). Its function is as follows. Phosphatase that hydrolyzes non-canonical purine nucleotides such as XTP and ITP to their respective diphosphate derivatives. Probably excludes non-canonical purines from DNA/RNA precursor pool, thus preventing their incorporation into DNA/RNA and avoiding chromosomal lesions. This chain is Inosine/xanthosine triphosphatase, found in Shewanella sp. (strain MR-7).